We begin with the raw amino-acid sequence, 64 residues long: Micrurotoxin 2 (64 aa).

5 disulfide bridges follow: Cys3-Cys24, Cys6-Cys11, Cys17-Cys41, Cys45-Cys57, and Cys58-Cys63.

Belongs to the three-finger toxin family. Ancestral subfamily. In terms of tissue distribution, expressed by the venom gland.

Its subcellular location is the secreted. Functionally, allosteric modulator of the GABA(A) receptor (GABR), possibly increasing receptor affinity for the agonist, thus enhancing receptor opening and macroscopic desensitization. In vivo, intracerebroventricular injection into mice results in periods of reduced basal activity, followed by bursts of intense seizures and death. This is Micrurotoxin 2 from Micrurus mipartitus (Red-tailed coral snake).